A 317-amino-acid polypeptide reads, in one-letter code: Lipoyl synthase (317 aa).

[4Fe-4S] cluster is bound by residues C59, C64, C70, C85, C89, C92, and S298. Positions 71-287 constitute a Radical SAM core domain; it reads WSQRHASFMI…AKIGKAKGFL (217 aa).

This sequence belongs to the radical SAM superfamily. Lipoyl synthase family. Requires [4Fe-4S] cluster as cofactor.

It is found in the cytoplasm. It catalyses the reaction [[Fe-S] cluster scaffold protein carrying a second [4Fe-4S](2+) cluster] + N(6)-octanoyl-L-lysyl-[protein] + 2 oxidized [2Fe-2S]-[ferredoxin] + 2 S-adenosyl-L-methionine + 4 H(+) = [[Fe-S] cluster scaffold protein] + N(6)-[(R)-dihydrolipoyl]-L-lysyl-[protein] + 4 Fe(3+) + 2 hydrogen sulfide + 2 5'-deoxyadenosine + 2 L-methionine + 2 reduced [2Fe-2S]-[ferredoxin]. The protein operates within protein modification; protein lipoylation via endogenous pathway; protein N(6)-(lipoyl)lysine from octanoyl-[acyl-carrier-protein]: step 2/2. Catalyzes the radical-mediated insertion of two sulfur atoms into the C-6 and C-8 positions of the octanoyl moiety bound to the lipoyl domains of lipoate-dependent enzymes, thereby converting the octanoylated domains into lipoylated derivatives. The sequence is that of Lipoyl synthase from Bartonella bacilliformis (strain ATCC 35685 / KC583 / Herrer 020/F12,63).